The primary structure comprises 343 residues: GTP 3',8-cyclase (343 aa).

The region spanning P19–P244 is the Radical SAM core domain. R28 is a binding site for GTP. 2 residues coordinate [4Fe-4S] cluster: C35 and C39. Y41 contacts S-adenosyl-L-methionine. C42 serves as a coordination point for [4Fe-4S] cluster. Position 77 (R77) interacts with GTP. G81 is an S-adenosyl-L-methionine binding site. T111 provides a ligand contact to GTP. An S-adenosyl-L-methionine-binding site is contributed by S135. A GTP-binding site is contributed by K171. M205 lines the S-adenosyl-L-methionine pocket. [4Fe-4S] cluster is bound by residues C268 and C271. R273–R275 is a GTP binding site. C285 contacts [4Fe-4S] cluster.

The protein belongs to the radical SAM superfamily. MoaA family. Monomer and homodimer. It depends on [4Fe-4S] cluster as a cofactor.

The catalysed reaction is GTP + AH2 + S-adenosyl-L-methionine = (8S)-3',8-cyclo-7,8-dihydroguanosine 5'-triphosphate + 5'-deoxyadenosine + L-methionine + A + H(+). It functions in the pathway cofactor biosynthesis; molybdopterin biosynthesis. Its function is as follows. Catalyzes the cyclization of GTP to (8S)-3',8-cyclo-7,8-dihydroguanosine 5'-triphosphate. This Nitrobacter winogradskyi (strain ATCC 25391 / DSM 10237 / CIP 104748 / NCIMB 11846 / Nb-255) protein is GTP 3',8-cyclase.